The chain runs to 460 residues: Cysteine--tRNA ligase (460 aa).

A Zn(2+)-binding site is contributed by C28. The short motif at 30 to 40 (VTIYDLCHIGH) is the 'HIGH' region element. Zn(2+)-binding residues include C209, H234, and E238. A 'KMSKS' region motif is present at residues 266 to 270 (KMSKS). K269 serves as a coordination point for ATP.

The protein belongs to the class-I aminoacyl-tRNA synthetase family. Monomer. It depends on Zn(2+) as a cofactor.

The protein resides in the cytoplasm. The enzyme catalyses tRNA(Cys) + L-cysteine + ATP = L-cysteinyl-tRNA(Cys) + AMP + diphosphate. The chain is Cysteine--tRNA ligase from Vibrio vulnificus (strain CMCP6).